The primary structure comprises 372 residues: Tyrosine--tRNA ligase (372 aa).

Residues Y37, Y169, Q173, D176, and Q191 each coordinate L-tyrosine. The short motif at 246 to 250 is the 'KMSKS' region element; that stretch reads KMSKS. Residue K249 coordinates ATP.

This sequence belongs to the class-I aminoacyl-tRNA synthetase family. TyrS type 4 subfamily. Homodimer.

Its subcellular location is the cytoplasm. It catalyses the reaction tRNA(Tyr) + L-tyrosine + ATP = L-tyrosyl-tRNA(Tyr) + AMP + diphosphate + H(+). Catalyzes the attachment of tyrosine to tRNA(Tyr) in a two-step reaction: tyrosine is first activated by ATP to form Tyr-AMP and then transferred to the acceptor end of tRNA(Tyr). This is Tyrosine--tRNA ligase from Pyrobaculum calidifontis (strain DSM 21063 / JCM 11548 / VA1).